The sequence spans 196 residues: ATP-dependent Clp protease proteolytic subunit (196 aa).

Serine 101 functions as the Nucleophile in the catalytic mechanism. Histidine 126 is a catalytic residue.

This sequence belongs to the peptidase S14 family. As to quaternary structure, component of the chloroplastic Clp protease core complex.

It is found in the plastid. The protein resides in the chloroplast stroma. It carries out the reaction Hydrolysis of proteins to small peptides in the presence of ATP and magnesium. alpha-casein is the usual test substrate. In the absence of ATP, only oligopeptides shorter than five residues are hydrolyzed (such as succinyl-Leu-Tyr-|-NHMec, and Leu-Tyr-Leu-|-Tyr-Trp, in which cleavage of the -Tyr-|-Leu- and -Tyr-|-Trp bonds also occurs).. In terms of biological role, cleaves peptides in various proteins in a process that requires ATP hydrolysis. Has a chymotrypsin-like activity. Plays a major role in the degradation of misfolded proteins. This is ATP-dependent Clp protease proteolytic subunit from Morus indica (Mulberry).